A 61-amino-acid chain; its full sequence is Small ribosomal subunit protein uS14 (61 aa).

Zn(2+)-binding residues include C24, C27, C40, and C43.

This sequence belongs to the universal ribosomal protein uS14 family. Zinc-binding uS14 subfamily. Part of the 30S ribosomal subunit. Contacts proteins S3 and S10. Zn(2+) is required as a cofactor.

Binds 16S rRNA, required for the assembly of 30S particles and may also be responsible for determining the conformation of the 16S rRNA at the A site. The sequence is that of Small ribosomal subunit protein uS14 from Mycoplasmoides gallisepticum (strain R(low / passage 15 / clone 2)) (Mycoplasma gallisepticum).